Reading from the N-terminus, the 435-residue chain is MKITLVNSRLDPAGVTIREQIQVLLADPEYQREGIDWEFLEIDGRLIHQERIDTGLNSDLLIFLSRHTSRRPVPVLTVHPTGNPGEALLGGEAGSFAPAAPGWMQAVLQNLVRLVPDGYQASYEVTHHGPTTLSTPSFFVEIGSTDHEWSDPVAGAAVAEAVLTAAPVDPISLIGFGGTHYAPRETAVALETRGAFGHILHSREIGGLTGSLLAKIATAAEAEAVYIDRKAIDRPALDHLYALLEETDLPVLGEKELHQIGSLSWQEYRSLRQIAGDAAPGAHLVIGTLPGGGTPVTATVPADLLAQAISADQGRVMTAIGRMPVVGLTGRGGLLLPIIITYERYRSQIIHDLITLCVKTIREEQHAVIDGDRLIIKKERFDPGLAASLGVPPGALFGMLKGGQAVRVGDQVIKPEMVRSCTVTAIHLRGLERYT.

It belongs to the DtdA deacylase family. As to quaternary structure, monomer. Zn(2+) is required as a cofactor.

The catalysed reaction is a D-aminoacyl-tRNA + H2O = a tRNA + a D-alpha-amino acid + H(+). It catalyses the reaction glycyl-tRNA(Ala) + H2O = tRNA(Ala) + glycine + H(+). Its function is as follows. D-aminoacyl-tRNA deacylase with broad substrate specificity. By recycling D-aminoacyl-tRNA to D-amino acids and free tRNA molecules, this enzyme counteracts the toxicity associated with the formation of D-aminoacyl-tRNA entities in vivo. The protein is D-aminoacyl-tRNA deacylase of Methanosphaerula palustris (strain ATCC BAA-1556 / DSM 19958 / E1-9c).